Consider the following 388-residue polypeptide: Succinate--CoA ligase [ADP-forming] subunit beta (388 aa).

An ATP-grasp domain is found at 9–244 (KDLLVSYDIA…PSQENVRDVL (236 aa)). ATP contacts are provided by residues lysine 46, 53–55 (GRG), valine 102, and glutamate 107. The Mg(2+) site is built by asparagine 199 and aspartate 213. Residues asparagine 264 and 321–323 (GIM) each bind substrate.

This sequence belongs to the succinate/malate CoA ligase beta subunit family. Heterotetramer of two alpha and two beta subunits. It depends on Mg(2+) as a cofactor.

The catalysed reaction is succinate + ATP + CoA = succinyl-CoA + ADP + phosphate. It catalyses the reaction GTP + succinate + CoA = succinyl-CoA + GDP + phosphate. Its pathway is carbohydrate metabolism; tricarboxylic acid cycle; succinate from succinyl-CoA (ligase route): step 1/1. Succinyl-CoA synthetase functions in the citric acid cycle (TCA), coupling the hydrolysis of succinyl-CoA to the synthesis of either ATP or GTP and thus represents the only step of substrate-level phosphorylation in the TCA. The beta subunit provides nucleotide specificity of the enzyme and binds the substrate succinate, while the binding sites for coenzyme A and phosphate are found in the alpha subunit. This Chlamydia caviae (strain ATCC VR-813 / DSM 19441 / 03DC25 / GPIC) (Chlamydophila caviae) protein is Succinate--CoA ligase [ADP-forming] subunit beta.